The sequence spans 214 residues: uncharacterized protein (214 aa).

The chain crosses the membrane as a helical span at residues 9–31; it reads FLYFAISVLVNLLFLKILYIYLF. The disordered stretch occupies residues 53 to 74; that stretch reads APPKKPGKPQKKVVKKKPEAVS. Basic residues predominate over residues 54 to 67; sequence PPKKPGKPQKKVVK.

The protein localises to the membrane. This is an uncharacterized protein from Aquifex aeolicus (strain VF5).